A 79-amino-acid polypeptide reads, in one-letter code: Small ribosomal subunit protein uS17 (79 aa).

It belongs to the universal ribosomal protein uS17 family. Part of the 30S ribosomal subunit.

In terms of biological role, one of the primary rRNA binding proteins, it binds specifically to the 5'-end of 16S ribosomal RNA. This chain is Small ribosomal subunit protein uS17, found in Rhodospirillum rubrum (strain ATCC 11170 / ATH 1.1.1 / DSM 467 / LMG 4362 / NCIMB 8255 / S1).